The primary structure comprises 206 residues: Protein tyrosine phosphatase receptor type C-associated protein (206 aa).

Residues valine 34–tryptophan 54 form a helical membrane-spanning segment. The disordered stretch occupies residues glycine 98 to alanine 173. 2 positions are modified to phosphoserine: serine 99 and serine 153. The span at leucine 161–alanine 173 shows a compositional bias: low complexity.

As to quaternary structure, interacts with CD45/PTPRC. Phosphorylated on tyrosine residues.

It localises to the membrane. The chain is Protein tyrosine phosphatase receptor type C-associated protein (PTPRCAP) from Homo sapiens (Human).